We begin with the raw amino-acid sequence, 290 residues long: Prepilin leader peptidase/N-methyltransferase (290 aa).

The helical transmembrane segment at 13 to 33 (AFVLCTILLGLLVGSFLNVVV) threads the bilayer. Positions 72, 75, 97, and 100 each coordinate Zn(2+). The next 5 helical transmembrane spans lie at 128-148 (FTWQ…MSLI), 158-178 (VLVL…LFAS), 183-203 (LFGA…FKLV), 228-248 (ILPL…VIML), and 261-276 (FGPY…LLWG).

It belongs to the peptidase A24 family. Zn(2+) serves as cofactor.

The protein localises to the cell inner membrane. It catalyses the reaction Typically cleaves a -Gly-|-Phe- bond to release an N-terminal, basic peptide of 5-8 residues from type IV prepilin, and then N-methylates the new N-terminal amino group, the methyl donor being S-adenosyl-L-methionine.. Functionally, plays an essential role in type IV pili and type II pseudopili formation by proteolytically removing the leader sequence from substrate proteins and subsequently monomethylating the alpha-amino group of the newly exposed N-terminal phenylalanine. Substrates include proteins required for pilus biogenesis PilE, PilV, PilW, and PilX as well as some components of the type II general secretory apparatus GspG, GspH, GspI and GspJ. The protein is Prepilin leader peptidase/N-methyltransferase (pilD) of Pseudomonas aeruginosa (strain ATCC 15692 / DSM 22644 / CIP 104116 / JCM 14847 / LMG 12228 / 1C / PRS 101 / PAO1).